The sequence spans 1077 residues: Error-prone DNA polymerase (1077 aa).

Belongs to the DNA polymerase type-C family. DnaE2 subfamily.

It localises to the cytoplasm. It catalyses the reaction DNA(n) + a 2'-deoxyribonucleoside 5'-triphosphate = DNA(n+1) + diphosphate. Its function is as follows. DNA polymerase involved in damage-induced mutagenesis and translesion synthesis (TLS). It is not the major replicative DNA polymerase. The chain is Error-prone DNA polymerase from Brucella suis biovar 1 (strain 1330).